The chain runs to 59 residues: Large ribosomal subunit protein uL30 (59 aa).

The protein belongs to the universal ribosomal protein uL30 family. Part of the 50S ribosomal subunit.

This chain is Large ribosomal subunit protein uL30, found in Leptospira biflexa serovar Patoc (strain Patoc 1 / ATCC 23582 / Paris).